Reading from the N-terminus, the 591-residue chain is Aspartate--tRNA(Asp/Asn) ligase (591 aa).

E174 contributes to the L-aspartate binding site. The segment at 198–201 (QLFK) is aspartate. R220 provides a ligand contact to L-aspartate. Residues 220-222 (RDE) and Q229 each bind ATP. An L-aspartate-binding site is contributed by H450. E483 contacts ATP. R490 provides a ligand contact to L-aspartate. Position 535-538 (535-538 (GLDR)) interacts with ATP.

The protein belongs to the class-II aminoacyl-tRNA synthetase family. Type 1 subfamily. As to quaternary structure, homodimer.

It is found in the cytoplasm. It carries out the reaction tRNA(Asx) + L-aspartate + ATP = L-aspartyl-tRNA(Asx) + AMP + diphosphate. In terms of biological role, aspartyl-tRNA synthetase with relaxed tRNA specificity since it is able to aspartylate not only its cognate tRNA(Asp) but also tRNA(Asn). Reaction proceeds in two steps: L-aspartate is first activated by ATP to form Asp-AMP and then transferred to the acceptor end of tRNA(Asp/Asn). In Pseudomonas fluorescens (strain Pf0-1), this protein is Aspartate--tRNA(Asp/Asn) ligase.